Reading from the N-terminus, the 275-residue chain is Shikimate dehydrogenase (NADP(+)) (275 aa).

Shikimate is bound by residues 16–18 (SKS) and threonine 63. Catalysis depends on lysine 67, which acts as the Proton acceptor. Shikimate is bound by residues asparagine 88 and aspartate 104. Residues 129–133 (GAGGA), 153–158 (NRTVAR), and methionine 219 contribute to the NADP(+) site. Residue tyrosine 221 participates in shikimate binding. Glycine 243 is a binding site for NADP(+).

Belongs to the shikimate dehydrogenase family. In terms of assembly, homodimer.

It carries out the reaction shikimate + NADP(+) = 3-dehydroshikimate + NADPH + H(+). Its pathway is metabolic intermediate biosynthesis; chorismate biosynthesis; chorismate from D-erythrose 4-phosphate and phosphoenolpyruvate: step 4/7. Functionally, involved in the biosynthesis of the chorismate, which leads to the biosynthesis of aromatic amino acids. Catalyzes the reversible NADPH linked reduction of 3-dehydroshikimate (DHSA) to yield shikimate (SA). This Marinobacter nauticus (strain ATCC 700491 / DSM 11845 / VT8) (Marinobacter aquaeolei) protein is Shikimate dehydrogenase (NADP(+)).